The chain runs to 508 residues: MEEFKRYLELDRSQQHNFVYPLIFQEYIYALAHDHGLNKSILLENAGYDNKSSLLIVKRLITHLITQMYQQNHFIFSANDSNQNKIFGHNTNLYSQMILEGFAVVVEIPFSSRLISFLEGKEIVKSKNLRSIHSIFPFLEDKFPHLNYVLDILILHSIHLEILVQTLRYWVKDASSLHLLRFFLYEYRNWNSLITPKKSSFSFSKRNQRLFLFLYNYHVCEYESIFIFLRNQSSHLRSISSGTFFEQIDFYEKIEHFVEVFTKDFQAILWLCKDPFMHYIRYQGKSLLASKGKSLLMNKWKYYFVNFWQCYFYMWSQPGRIHINQLSNHSFDFLGYLSSVRLTPSMVRSQMLENSFLIGNAIKKFDTLVPIIPLIGSLSKAKFCNVLGHPISKPVWADLSDSDIIDRFGRIYRNLSHYYSGSSKKMNLYRIKYILRLSCARTLARKHKSTVRAFLKRLGSELLEEFFTEEERVFSLTFKKASSTSRGLYRRRIWYLDIICINDLANHK.

Belongs to the intron maturase 2 family. MatK subfamily.

Its subcellular location is the plastid. The protein localises to the chloroplast. In terms of biological role, usually encoded in the trnK tRNA gene intron. Probably assists in splicing its own and other chloroplast group II introns. This is Maturase K from Manilkara zapota (Sapodilla plum).